Consider the following 229-residue polypeptide: Urease accessory protein UreF (229 aa).

Belongs to the UreF family. In terms of assembly, ureD, UreF and UreG form a complex that acts as a GTP-hydrolysis-dependent molecular chaperone, activating the urease apoprotein by helping to assemble the nickel containing metallocenter of UreC. The UreE protein probably delivers the nickel.

It is found in the cytoplasm. Functionally, required for maturation of urease via the functional incorporation of the urease nickel metallocenter. This is Urease accessory protein UreF from Staphylococcus epidermidis (strain ATCC 12228 / FDA PCI 1200).